The sequence spans 310 residues: MSTVSSSRGSAPRLLAIVGPTGTGKSELAVDLAEELGGEVVNADAMQLYKGMDIGTAKLTTAERRGVPHHLLDVLDVTETASVAAYQRHARHAVEELLEAGRTPLLVGGSGLYVQAVLDDLAFPGTDEQVRARWEEELHLHGAAVLHRRLRELDPVAADAILPTNGRRLVRALEVIEITGRPFSAHLPKPGPPRYGAVLVGLDREVAELDDRIDLRVTRMFDNGLVEEVRELEKQGLRRGRTASRALGYQQVLAELDGAGDMAAAAAETAKLHRRFVRRQRSWFRRDKRIHWFDAARPGLAGDVRALLDT.

Residue 19 to 26 (GPTGTGKS) participates in ATP binding. 21–26 (TGTGKS) contacts substrate.

This sequence belongs to the IPP transferase family. Monomer. Mg(2+) serves as cofactor.

The catalysed reaction is adenosine(37) in tRNA + dimethylallyl diphosphate = N(6)-dimethylallyladenosine(37) in tRNA + diphosphate. Functionally, catalyzes the transfer of a dimethylallyl group onto the adenine at position 37 in tRNAs that read codons beginning with uridine, leading to the formation of N6-(dimethylallyl)adenosine (i(6)A). The chain is tRNA dimethylallyltransferase from Saccharopolyspora erythraea (strain ATCC 11635 / DSM 40517 / JCM 4748 / NBRC 13426 / NCIMB 8594 / NRRL 2338).